The following is a 410-amino-acid chain: Histidine--tRNA ligase (410 aa).

Belongs to the class-II aminoacyl-tRNA synthetase family. In terms of assembly, homodimer.

The protein resides in the cytoplasm. It catalyses the reaction tRNA(His) + L-histidine + ATP = L-histidyl-tRNA(His) + AMP + diphosphate + H(+). The sequence is that of Histidine--tRNA ligase from Campylobacter hominis (strain ATCC BAA-381 / DSM 21671 / CCUG 45161 / LMG 19568 / NCTC 13146 / CH001A).